The primary structure comprises 1211 residues: Transient receptor potential cation channel subfamily A member 1 homolog (1211 aa).

The Cytoplasmic segment spans residues 1–811 (MSKKSLGLDV…LKYKWNRLGR (811 aa)). ANK repeat units follow at residues 49–79 (NLRS…AVNA), 83–112 (DFMT…LPNT), 116–169 (EGDT…EIDP), 173–202 (YQLT…DVDA), 206–235 (NKMT…NVTK), 239–270 (RLNT…AIKA), 277–306 (EKKT…KNSC), 311–340 (REKE…NKNE), 344–374 (VKAV…NIDV), 378–407 (QGLT…NLTI), 411–440 (DERT…KKNK), 473–502 (DQNT…SITQ), 506–535 (DEET…RLLL), 540–569 (MGNS…DKEA), 573–602 (YQKT…QIES), 605–634 (DTKT…TIDR), and 638–669 (EGKT…NLMI). Residues 812–832 (PMYYFALFMYLVFIVSLTQYV) form a helical membrane-spanning segment. Residues 833–870 (RHTKAPYNVWNEESYYDSEYFDENETCPQINTTKPDVV) lie on the Extracellular side of the membrane. N-linked (GlcNAc...) asparagine glycosylation is found at asparagine 856 and asparagine 863. The chain crosses the membrane as a helical span at residues 871–891 (WKIIIQTLAVCQILVECFQLF). At 892-894 (QRK) the chain is on the cytoplasmic side. Residues 895–915 (FAYLVNWENWIDCFIYSTALI) traverse the membrane as a helical segment. Residues 916-932 (TVYDFSECSATSGVRQN) are Extracellular-facing. Residues 933–953 (WQWILAALCIFFGWINLLFMI) traverse the membrane as a helical segment. The Cytoplasmic segment spans residues 954–975 (RKMPRFGIFVVMFVDIVKTFFR). A helical transmembrane segment spans residues 976 to 996 (FFPVFVLFIIAFSSSFYVILQ). The Extracellular portion of the chain corresponds to 997-1004 (NRPEFSTI). Residues 1005-1025 (FMSPLKTTVMMIGEFEFTGIF) constitute an intramembrane region (pore-forming). Residues 1026–1048 (HGDETTHAEKMFGPAHTAVACAL) are Extracellular-facing. Residues 1049–1069 (FFFFCIIMTILLMNLLVGLAV) traverse the membrane as a helical segment. Topologically, residues 1070–1193 (DDIKGVQEKA…EKQVRLEAII (124 aa)) are cytoplasmic. Residues 1149–1191 (EMYEREAEFTSEMTQKLQNQAAKLKNIQENIDVMYEKQVRLEA) adopt a coiled-coil conformation.

Belongs to the transient receptor (TC 1.A.4) family. As to quaternary structure, homotetramer. Expressed in many sensory neurons, including OLQ and IL1 neurons.

The protein localises to the cell membrane. Receptor-activated non-selective cation channel involved in the nose-touch response and foraging behavior. Contributes to the neural responses of sensory neurons to touch, particularly after repeated mechanical stimulation. Has no apparent role in thermosensory or chemosensory behaviors. This Caenorhabditis elegans protein is Transient receptor potential cation channel subfamily A member 1 homolog (trpa-1).